A 126-amino-acid chain; its full sequence is UPF0231 protein VC0395_A0134/VC395_0622 (126 aa).

The protein belongs to the UPF0231 family.

This is UPF0231 protein VC0395_A0134/VC395_0622 from Vibrio cholerae serotype O1 (strain ATCC 39541 / Classical Ogawa 395 / O395).